Reading from the N-terminus, the 159-residue chain is Ribonuclease H (159 aa).

The 143-residue stretch at 8–150 (NLKEITMYTD…CDQLAVAAAK (143 aa)) folds into the RNase H type-1 domain. Aspartate 17, glutamate 55, aspartate 77, and aspartate 142 together coordinate Mg(2+).

Belongs to the RNase H family. In terms of assembly, monomer. Mg(2+) serves as cofactor.

Its subcellular location is the cytoplasm. The enzyme catalyses Endonucleolytic cleavage to 5'-phosphomonoester.. Functionally, endonuclease that specifically degrades the RNA of RNA-DNA hybrids. The protein is Ribonuclease H of Desulforamulus reducens (strain ATCC BAA-1160 / DSM 100696 / MI-1) (Desulfotomaculum reducens).